Reading from the N-terminus, the 389-residue chain is Gustatory receptor for bitter taste 22e (389 aa).

At 1 to 14 (MFRPSGSGYRQKWT) the chain is on the cytoplasmic side. A helical membrane pass occupies residues 15-35 (GLTLKGALYGSWILGVFPFAY). Residues 36–46 (DSWTRTLRRSK) are Extracellular-facing. Residues 47-67 (WLIAYGFVLNAAFILLVVTND) traverse the membrane as a helical segment. The Cytoplasmic portion of the chain corresponds to 68-142 (TESETPLRME…SLEECISFDR (75 aa)). A helical membrane pass occupies residues 143 to 163 (FVLYKGFSVVLELVSMLVLEL). Residues 164-170 (GMSPNYS) are Extracellular-facing. Asparagine 168 is a glycosylation site (N-linked (GlcNAc...) asparagine). A helical transmembrane segment spans residues 171–191 (AQFFIGLGSLCLMLLAVLLGA). Residues 192–254 (SHFHLAVVFV…QRLASIYDYQ (63 aa)) are Cytoplasmic-facing. Residues 255–275 (MVMVMVSFLIANVLGIYFFII) traverse the membrane as a helical segment. Topologically, residues 276-287 (YSISLNKSLDFK) are extracellular. A glycan (N-linked (GlcNAc...) asparagine) is linked at asparagine 281. The chain crosses the membrane as a helical span at residues 288–308 (ILVFVQALVINMLDFWLNVEI). The Cytoplasmic segment spans residues 309 to 366 (CELAERTGRQTSTILKLFNDIENIDEKLERSITDFALFCSHRRLRFHHCGLFYVNYEM). A helical transmembrane segment spans residues 367 to 387 (GFRMAITSFLYLLFLIQFDYW). Residues 388–389 (NL) are Extracellular-facing.

The protein belongs to the insect chemoreceptor superfamily. Gustatory receptor (GR) family. Gr22e subfamily. In terms of tissue distribution, taste bristles on the labial palp, labral and cibarial sense organs, chemosensory bristles on the leg and anterior wing margin. In larvae, is expressed in neurons of the terminal external chemosensory organ and in the dorsal pharyngeal sense organ. Neurons expressing Gr22e also express Gr66a and correspond to taste neurons that mediate sensitivity to bitter compounds.

The protein localises to the cell membrane. Its function is as follows. Gustatory receptor which mediates acceptance or avoidance behavior, depending on its substrates. Seems to be involved in the sensing of bitter taste since it is expressed in neurons that mediate sensitivity to bitter compounds which are also avoidance-type taste neurons. This chain is Gustatory receptor for bitter taste 22e (Gr22e), found in Drosophila melanogaster (Fruit fly).